Here is a 438-residue protein sequence, read N- to C-terminus: Aminopeptidase E (438 aa).

Residues C70, H362, and N383 contribute to the active site.

It belongs to the peptidase C1 family.

The protein localises to the cytoplasm. Functionally, can hydrolyze internal peptide bonds in Met-enkephalin and bradykinin; however, hydrolysis of alpha-, beta-, and kappa-caseins is not detected. This chain is Aminopeptidase E (pepE), found in Lactobacillus helveticus (Lactobacillus suntoryeus).